The sequence spans 631 residues: Nucleoside triphosphatase I (631 aa).

The 163-residue stretch at 42 to 204 (FLGLDSMHSL…TMLVNLLRPG (163 aa)) folds into the Helicase ATP-binding domain. 55–62 (HETGVGKT) contributes to the ATP binding site. Residues 141–144 (DECH) carry the DEXH box motif. One can recognise a Helicase C-terminal domain in the interval 367–532 (KFIDVCLGIL…EFVQLFRVFK (166 aa)). The interval 457 to 524 (DIFILDMTWN…EIIQSKSKEF (68 aa)) is binding to the cap-specific mRNA (nucleoside-2'-O-)-methyltransferase.

It belongs to the helicase family. NPH I subfamily. Monomer. Interacts (via C-terminus) with RAP94/OPG109 (via N-terminus). Interacts with the cap-specific mRNA (nucleoside-2'-O-)-methyltransferase OPG102.

It is found in the virion. It carries out the reaction a ribonucleoside 5'-triphosphate + H2O = a ribonucleoside 5'-diphosphate + phosphate + H(+). DNA-dependent ATPase that acts as a 5' to 3' translocase on single-stranded DNA and thereby plays a role in transcription termination of viral early genes. Uses forward translocation in concert with the viral RNA polymerase RAP94/OPG109 subunit and the capping enzyme/VTF to catalyze release of UUUUUNU-containing nascent RNA from the elongation complex. In addition, acts as a positive elongation factor to assist transcription through problematic sequences. The sequence is that of Nucleoside triphosphatase I (OPG123) from Vaccinia virus (strain Copenhagen) (VACV).